Consider the following 264-residue polypeptide: Small ribosomal subunit protein uS3 (264 aa).

The KH type-2 domain occupies 39–107; sequence VREFLKKKLK…PVHVNIEEIR (69 aa). Residues 211–264 are disordered; the sequence is NDAPVVEEPQEERRKRPGRPEGRRREGEGRPGGQRRGAGAGGRRSGGADAKTGE. Over residues 221–239 the composition is skewed to basic and acidic residues; the sequence is EERRKRPGRPEGRRREGEG. Gly residues predominate over residues 240–255; sequence RPGGQRRGAGAGGRRS.

It belongs to the universal ribosomal protein uS3 family. Part of the 30S ribosomal subunit. Forms a tight complex with proteins S10 and S14.

Its function is as follows. Binds the lower part of the 30S subunit head. Binds mRNA in the 70S ribosome, positioning it for translation. This is Small ribosomal subunit protein uS3 from Ralstonia nicotianae (strain ATCC BAA-1114 / GMI1000) (Ralstonia solanacearum).